Consider the following 106-residue polypeptide: Probable insulin-like peptide beta-type 2 (106 aa).

The signal sequence occupies residues 1–15 (MNAIIFCLLFTTVTA). Residues 16-56 (TYEVFGKGIEHRNEHLIINQLDIIPVESTPTPNRASRVQKR) constitute a propeptide that is removed on maturation. Disulfide bonds link Cys-58–Cys-86, Cys-70–Cys-99, Cys-73–Cys-100, and Cys-85–Cys-90.

The protein belongs to the insulin family.

It is found in the secreted. The chain is Probable insulin-like peptide beta-type 2 (ins-2) from Caenorhabditis elegans.